Reading from the N-terminus, the 343-residue chain is Cysteine proteinase 1 (343 aa).

The signal sequence occupies residues 1–18 (MKVILLFVLAVFTVFVSS). Residues 19–117 (RGIPLEEQSQ…DYLDDEFINS (99 aa)) constitute a propeptide, activation peptide. 3 disulfides stabilise this stretch: Cys-139–Cys-190, Cys-173–Cys-224, and Cys-279–Cys-332. Cys-142 is an active-site residue. Active-site residues include His-286 and Asn-311.

It belongs to the peptidase C1 family. In terms of processing, phosphoglycosylated, contains GlcNAc-alpha-1-P-Ser residues.

Its subcellular location is the lysosome. In terms of biological role, cysteine proteinases 1 and 2 are believed to participate in the breakdown of protein during differentiation of Dictyostelium as a response to starvation. This is Cysteine proteinase 1 (cprA) from Dictyostelium discoideum (Social amoeba).